A 1152-amino-acid chain; its full sequence is MLVLNNFERIKIGLASPDQIRAWSHGEVKKPETINYRTLKPERDGLFCERIFGPTKDWECHCGKYKRVRYKGVVCDRCGVEVTRSKVRRERLGHIELAAPVSHIWYFKGIPSRMGLLLDMSPRSLEKVLYFVSYIVIDPGETPLLKKQLLTETEYREAREKYGNAFKAGMGAEAIKELLAEIDLDELSAELKAEIKESTGQRRIRALRRLEVVESFRKSGNRPEWMILDVIPVIPPELRPMVQLDGGRFATSDLNDLYRRVINRNNRLKRLLELGAPDIIVRNEKRMLQEAVDALIDNGRRGRPVTGPGNRPLKSLSDMLKGKQGRFRQNLLGKRVDYSGRSVIVVGPELKLHQCGLPKEMALELFKPFVMKKLVADGIAHNIKSAKRMVERVKPEVWDVLEEVIKEHPVLLNRAPTLHRLGIQAFEPVLVEGRAIQIHPLVCTAYNADFDGDQMAVHVPLSAEAQAEARLLMLSSHNILNPKDGKPVVVPTQDMVIGSYYLTVEKPGAKGEGKKFAHPEEVIMAYEEGVIELHTKIKVRYPIRGEIVELETTPGRIIFNEVIPEELRFINHLVDKKALGKIVTESYRKLGYEKTGYLLDGLKKLGFHYATKAGLTIGIVDITVPKEKQEILEEADRMVADIEVKYRRGLITEDERYQRVVDIWNAATEKVTKKLVETLEASQFNHVYMMAKSGARGNIQQIRQLAGMRGLMADPSGRIIDLPIKANFREGLTVLEYFISTHGARKGLADTALRTADSGYLTRRLVDVCQDVIVREEDCGTEDGIYVTDVKDGTDVIEKLEDRILGRVAAEDVVHPETGELLVAKNQEITEEIAEKIVSANIKKVKIRSVLTCRTRHGVCTRCYGRNLATNSIVDIGEAVGIIAAQSIGEPGTQLTMRTFHTGGVAGEDITQGLPRVEELFEARRPKGQAIITEIDGVVEVRDNKGRREIEVINQETGERKVYPITYQARIKVQTGDKVYAGDELTEGPINPHDLIKVKGIEGAQLYLLQEVQKVYRMQGVEINDKHIEVVIRQMLRKVKIEDSGDTDLLPGSLVDIFEFEDENAKVIAKGGKPATAKRVLLGITKASLATDSFLSAASFQETTRVLTEAAIKGKVDPLLGLKENVIIGKLIPAGTGMARYRNIMVQAKNEE.

4 residues coordinate Zn(2+): Cys60, Cys62, Cys75, and Cys78. Mg(2+)-binding residues include Asp449, Asp451, and Asp453. Zn(2+)-binding residues include Cys779, Cys853, Cys860, and Cys863.

This sequence belongs to the RNA polymerase beta' chain family. The RNAP catalytic core consists of 2 alpha, 1 beta, 1 beta' and 1 omega subunit. When a sigma factor is associated with the core the holoenzyme is formed, which can initiate transcription. The cofactor is Mg(2+). It depends on Zn(2+) as a cofactor.

It catalyses the reaction RNA(n) + a ribonucleoside 5'-triphosphate = RNA(n+1) + diphosphate. In terms of biological role, DNA-dependent RNA polymerase catalyzes the transcription of DNA into RNA using the four ribonucleoside triphosphates as substrates. This is DNA-directed RNA polymerase subunit beta' from Carboxydothermus hydrogenoformans (strain ATCC BAA-161 / DSM 6008 / Z-2901).